Reading from the N-terminus, the 392-residue chain is GTPase Obg (392 aa).

The 159-residue stretch at 1 to 159 (MKFVDEAEIR…RNLKLELMLL (159 aa)) folds into the Obg domain. Positions 121-146 (GFHGLGNTRFKSSTNRAPRQKTNGTP) are disordered. Over residues 129–145 (RFKSSTNRAPRQKTNGT) the composition is skewed to polar residues. Residues 160–333 (ADVGLLGMPN…LCNDVMDFIE (174 aa)) form the OBG-type G domain. Residues 166–173 (GMPNAGKS), 191–195 (FTTLV), 213–216 (DIPG), 283–286 (NKVD), and 314–316 (SAF) contribute to the GTP site. Mg(2+) is bound by residues serine 173 and threonine 193.

This sequence belongs to the TRAFAC class OBG-HflX-like GTPase superfamily. OBG GTPase family. As to quaternary structure, monomer. It depends on Mg(2+) as a cofactor.

The protein localises to the cytoplasm. An essential GTPase which binds GTP, GDP and possibly (p)ppGpp with moderate affinity, with high nucleotide exchange rates and a fairly low GTP hydrolysis rate. Plays a role in control of the cell cycle, stress response, ribosome biogenesis and in those bacteria that undergo differentiation, in morphogenesis control. The sequence is that of GTPase Obg from Alteromonas mediterranea (strain DSM 17117 / CIP 110805 / LMG 28347 / Deep ecotype).